The chain runs to 732 residues: LRRQKRDWVIPPIKVPENERGPFPKNLVQIKSNRDREAKIFYSITGQGADAPPEGIFTIEKETGWMKVTQPLDREHINKYHLYSHAVSENGKPVEEPMEIIVTVTDQNDNKPQFTQEVFRGSVPEGALPGTSVMRVNATDADDDVETYNGVIAYSILSQEPREPHPHMFTVNRATGTLSVIASGLDRERVREYTLTMQAADLDGQGLTTTALAVIEITDVNDNAPEFDPKTYEAAVPENEAELEVARLATTDLDEPHTPAWRAVYSIVRGNEGGAFTITTDPASNEGVLRTAKGLDYEAKRQFVLHVAVVNEAPFAIKLPTATATVMVSVEDVNEAPVFDPPLRLAQVPEDVPLGQPLASYTAQDPDRAQQQRIKYVMGSDPAGWLAVHPENGLITAREQLDRESPFTKNSTYMAVLLAVDDGLPPATGTGTLLLTLLDVNDHGPEPEPRDIVICNRSPVPQVLTITDRDLPPNTGPFRAELSHGSGDSWAVEVGNGGDTVALWLTEPLEQNLYSVYLRLFDRQGKDQVTVIRAQVCDCQGRVESCAQKPRVDTGVPIVLAVLGAVLALLLVLLLLLLLVRRRKVVKEPLLLPEDDTRDNIFYYGEEGGGEEDQDYDLSQLHRGLDARPEVIRNDVAPPLMAAPQYRPRPANPDEIGNFIDENLKAADTDPTAPPYDSLLVFDYEGGGSEATSLSSLNSSASDQDQDYDYLNEWGNRFKKLAELYGGGEDEE.

Positions 1-6 (LRRQKR) are excised as a propeptide. 5 consecutive Cadherin domains span residues 6–114 (RDWV…KPQF), 115–227 (TQEV…APEF), 228–339 (DPKT…APVF), 340–443 (DPPL…VNDH), and 444–554 (GPEP…RVDT). Residues 6–554 (RDWVIPPIKV…SCAQKPRVDT (549 aa)) lie on the Extracellular side of the membrane. An N-linked (GlcNAc...) asparagine glycan is attached at Asn-137. N-linked (GlcNAc...) asparagine glycosylation occurs at Asn-410. A helical membrane pass occupies residues 555-580 (GVPIVLAVLGAVLALLLVLLLLLLLV). Residues 581-732 (RRRKVVKEPL…ELYGGGEDEE (152 aa)) are Cytoplasmic-facing.

Expressed in a wide variety of tissues.

It localises to the cell membrane. Its function is as follows. Cadherins are calcium-dependent cell adhesion proteins. They preferentially interact with themselves in a homophilic manner in connecting cells; cadherins may thus contribute to the sorting of heterogeneous cell types. B-cadherin may have important functions in neurogenesis, in at least some epithelia, and in embryogenesis. This chain is B-cadherin (K-CAM), found in Gallus gallus (Chicken).